The chain runs to 1138 residues: Ras guanine nucleotide exchange factor N (1138 aa).

LRR repeat units lie at residues Met-1 to Leu-16, His-18 to Gly-39, and Thr-43 to Leu-64. Disordered regions lie at residues Ala-126–Asn-180, Phe-239–Lys-301, Asn-319–Asn-360, Ile-389–Gln-411, Gly-473–Asn-540, Ala-601–Ser-643, and Met-660–Gly-680. A compositionally biased stretch (low complexity) spans Lys-140 to Thr-158. The span at Arg-263 to Ile-275 shows a compositional bias: polar residues. Residues Ser-283–Ser-299 show a composition bias toward gly residues. The segment covering Gly-326–Ile-352 has biased composition (low complexity). The segment covering Arg-393–Ile-405 has biased composition (basic and acidic residues). The segment covering Pro-487–Ile-496 has biased composition (pro residues). Over residues Asp-498–Ile-511 the composition is skewed to polar residues. 2 stretches are compositionally biased toward low complexity: residues Asn-512 to Asn-540 and Asn-605 to Gln-634. An N-terminal Ras-GEF domain is found at Gly-733 to Arg-855. The Ras-GEF domain occupies Arg-891 to Lys-1118.

Its function is as follows. Promotes the exchange of Ras-bound GDP by GTP. May play a role in chemotaxis. In Dictyostelium discoideum (Social amoeba), this protein is Ras guanine nucleotide exchange factor N (gefN).